The following is a 215-amino-acid chain: Adenylate kinase (215 aa).

Gly-10–Thr-15 lines the ATP pocket. The NMP stretch occupies residues Ser-30 to Val-59. AMP is bound by residues Thr-31, Arg-36, Gln-57–Val-59, Gly-85–Arg-88, and Gln-92. The tract at residues Gly-126–Asp-162 is LID. Residue Arg-127 coordinates ATP. Cys-130 and Cys-132 together coordinate Zn(2+). Ser-135–Tyr-136 is a binding site for ATP. Residues Cys-149 and Cys-152 each coordinate Zn(2+). Positions 159 and 170 each coordinate AMP. Gly-198 provides a ligand contact to ATP.

This sequence belongs to the adenylate kinase family. Monomer.

It localises to the cytoplasm. It catalyses the reaction AMP + ATP = 2 ADP. The protein operates within purine metabolism; AMP biosynthesis via salvage pathway; AMP from ADP: step 1/1. Its function is as follows. Catalyzes the reversible transfer of the terminal phosphate group between ATP and AMP. Plays an important role in cellular energy homeostasis and in adenine nucleotide metabolism. In Methanothrix thermoacetophila (strain DSM 6194 / JCM 14653 / NBRC 101360 / PT) (Methanosaeta thermophila), this protein is Adenylate kinase.